The primary structure comprises 145 residues: D-aminoacyl-tRNA deacylase (145 aa).

The short motif at 137-138 is the Gly-cisPro motif, important for rejection of L-amino acids element; it reads GP.

The protein belongs to the DTD family. As to quaternary structure, homodimer.

It is found in the cytoplasm. The catalysed reaction is glycyl-tRNA(Ala) + H2O = tRNA(Ala) + glycine + H(+). It catalyses the reaction a D-aminoacyl-tRNA + H2O = a tRNA + a D-alpha-amino acid + H(+). In terms of biological role, an aminoacyl-tRNA editing enzyme that deacylates mischarged D-aminoacyl-tRNAs. Also deacylates mischarged glycyl-tRNA(Ala), protecting cells against glycine mischarging by AlaRS. Acts via tRNA-based rather than protein-based catalysis; rejects L-amino acids rather than detecting D-amino acids in the active site. By recycling D-aminoacyl-tRNA to D-amino acids and free tRNA molecules, this enzyme counteracts the toxicity associated with the formation of D-aminoacyl-tRNA entities in vivo and helps enforce protein L-homochirality. The sequence is that of D-aminoacyl-tRNA deacylase from Pseudoalteromonas atlantica (strain T6c / ATCC BAA-1087).